The primary structure comprises 159 residues: Elicitor-responsive protein 1 (159 aa).

The C2 domain occupies 1 to 112 (MAGSGVLEVH…SLGMEHGTWE (112 aa)). 2 residues coordinate Ca(2+): Asp21 and Asp30. Phosphoserine; by CPK is present on Ser44. The Ca(2+) site is built by Asp81, Asp83, Ser86, and Asp89.

It depends on Ca(2+) as a cofactor. In terms of processing, phosphorylated at Ser-44 by CPK18 in a calcium-dependent manner. In terms of tissue distribution, isoform 2 is expressed in young vascular tissues and tiller buds.

Its subcellular location is the cytoplasm. The protein localises to the cell membrane. May play a role in plant defense signaling. Isoform 2 binds to phospholipids in a Ca(2+)-dependent manner in response to pathogen elicitors. The protein is Elicitor-responsive protein 1 (ERG1) of Oryza sativa subsp. japonica (Rice).